We begin with the raw amino-acid sequence, 337 residues long: Glyceraldehyde-3-phosphate dehydrogenase, cytosolic (337 aa).

Residues 13–14, Asp-35, and Arg-82 contribute to the NAD(+) site; that span reads RI. D-glyceraldehyde 3-phosphate-binding positions include 153 to 155, Thr-184, 213 to 214, and Arg-236; these read SCT and TG. The Nucleophile role is filled by Cys-154. Asn-318 contacts NAD(+).

This sequence belongs to the glyceraldehyde-3-phosphate dehydrogenase family. As to quaternary structure, homotetramer.

The protein localises to the cytoplasm. It catalyses the reaction D-glyceraldehyde 3-phosphate + phosphate + NAD(+) = (2R)-3-phospho-glyceroyl phosphate + NADH + H(+). It functions in the pathway carbohydrate degradation; glycolysis; pyruvate from D-glyceraldehyde 3-phosphate: step 1/5. Key enzyme in glycolysis that catalyzes the first step of the pathway by converting D-glyceraldehyde 3-phosphate (G3P) into 3-phospho-D-glyceroyl phosphate. Essential for the maintenance of cellular ATP levels and carbohydrate metabolism. The sequence is that of Glyceraldehyde-3-phosphate dehydrogenase, cytosolic (GAPC) from Antirrhinum majus (Garden snapdragon).